Consider the following 349-residue polypeptide: uncharacterized protein (349 aa).

The N-terminal stretch at M1 to A16 is a signal peptide. Residues M17–S326 are Lumenal-facing. Disordered regions lie at residues A115–R190 and T243–S322. 3 stretches are compositionally biased toward low complexity: residues S116–T176, T243–G278, and S289–S322. Residues L327–L347 form a helical membrane-spanning segment. Over T348 to L349 the chain is Cytoplasmic.

It localises to the endoplasmic reticulum membrane. This is an uncharacterized protein from Schizosaccharomyces pombe (strain 972 / ATCC 24843) (Fission yeast).